We begin with the raw amino-acid sequence, 491 residues long: Probable Xaa-Pro aminopeptidase An01g13040 (491 aa).

Residues Asp276, Asp287, Glu420, and Glu459 each contribute to the Mn(2+) site.

It belongs to the peptidase M24B family. Requires Mn(2+) as cofactor.

The catalysed reaction is Release of any N-terminal amino acid, including proline, that is linked to proline, even from a dipeptide or tripeptide.. Functionally, catalyzes the removal of a penultimate prolyl residue from the N-termini of peptides. The chain is Probable Xaa-Pro aminopeptidase An01g13040 from Aspergillus niger (strain ATCC MYA-4892 / CBS 513.88 / FGSC A1513).